Reading from the N-terminus, the 713-residue chain is Low-density lipoprotein receptor-related protein 10 (713 aa).

The signal sequence occupies residues 1-17; sequence MLSALPLLFLLLGGALA. The Extracellular portion of the chain corresponds to 18–441; it reads RPDRITFPRS…WDCSYALPRK (424 aa). 2 disulfide bridges follow: cysteine 29–cysteine 58 and cysteine 81–cysteine 99. The region spanning 29–137 is the CUB 1 domain; sequence CEAPPAVLSE…QGFLLTYSQD (109 aa). A glycan (N-linked (GlcNAc...) asparagine) is linked at asparagine 57. Asparagine 112 is a glycosylation site (N-linked (GlcNAc...) asparagine). In terms of domain architecture, LDL-receptor class A 1 spans 140 to 176; it reads LCLQEEFQCLNHRCIPAAQRCDGIDACGDGSDEAGCS. 4 disulfide bridges follow: cysteine 141–cysteine 153, cysteine 148–cysteine 166, cysteine 160–cysteine 175, and cysteine 193–cysteine 221. A CUB 2 domain is found at 193–306; it reads CNLTLEDFYG…RGFNATYHVR (114 aa). Residues asparagine 194 and asparagine 300 are each glycosylated (N-linked (GlcNAc...) asparagine). 3 LDL-receptor class A domains span residues 308-355, 356-398, and 399-435; these read YCLP…EGCP, GCPP…RRCR, and HCQPGNFRCRDEKCVYETWVCDGQPDCTDGSDEWDCS. 9 cysteine pairs are disulfide-bonded: cysteine 309–cysteine 332, cysteine 316–cysteine 345, cysteine 339–cysteine 354, cysteine 357–cysteine 375, cysteine 364–cysteine 388, cysteine 382–cysteine 397, cysteine 400–cysteine 412, cysteine 407–cysteine 425, and cysteine 419–cysteine 434. Residues 442–462 form a helical membrane-spanning segment; the sequence is VITAAVIGSLVCGLLLVIALG. Over 463 to 713 the chain is Cytoplasmic; the sequence is CTCKLYAIRT…VEAEDEPLLA (251 aa). A disordered region spans residues 566–636; it reads LLPRTNTPAR…TLPALATVSE (71 aa). Threonine 596 bears the Phosphothreonine mark. Over residues 614–626 the composition is skewed to pro residues; it reads PPLPIKTPIPTPS.

Belongs to the LDLR family. In terms of tissue distribution, highly expressed in heart, lung, liver and liver. Expressed at low level in brain and spleen. Weakly or not expressed in testis and skeletal muscle. In liver, it is expressed in hepatocytes and at higher level in sinusoidal lining. In the kidney, it is expressed in peritubular capillaries. In brain, it is expressed in the epithelium of the choroid plexus ependymal cells of the third ventricle pia matter, and to lesser extent in hippocampal fields CA2 and CA3.

It localises to the membrane. It is found in the coated pit. Probable receptor, which is involved in the internalization of lipophilic molecules and/or signal transduction. May be involved in the uptake of lipoprotein APOE in liver. The sequence is that of Low-density lipoprotein receptor-related protein 10 (Lrp10) from Mus musculus (Mouse).